A 207-amino-acid polypeptide reads, in one-letter code: Myosin light chain 6B (207 aa).

The disordered stretch occupies residues 1–50 (MPPKKDAPVKKPAGPSISKPAAKSTPGTPLAKAKAEPAAPQAPAKSQEPP). Residues 36 to 50 (EPAAPQAPAKSQEPP) are compositionally biased toward low complexity. EF-hand domains lie at 63–98 (DQLE…LGQN), 140–175 (GTYE…LGEK), and 175–207 (KMTE…ILSL).

Myosin is a hexamer of 2 heavy chains and 4 light chains.

Regulatory light chain of myosin. Does not bind calcium. In Mus musculus (Mouse), this protein is Myosin light chain 6B.